Here is a 299-residue protein sequence, read N- to C-terminus: Taste receptor type 2 member 1 (299 aa).

Residues 1 to 9 (MLESHLIIY) lie on the Extracellular side of the membrane. The helical transmembrane segment at 10-30 (FLLAVIQFLLGIFTNGIIVVV) threads the bilayer. Residues 31–55 (NGIDLIKHRKMAPLDLLLSCLAVSR) are Cytoplasmic-facing. Residues 56–76 (IFLQLFIFYVNVIVIFFIEFI) traverse the membrane as a helical segment. The Extracellular portion of the chain corresponds to 77–81 (MCSAN). Residues 82 to 102 (CAILLFINELELWLATWLGVF) form a helical membrane-spanning segment. Topologically, residues 103-124 (YCAKVASVRHPLFXWLKMRISK) are cytoplasmic. Residues 125-145 (LVPWMILGSLLYVSMICVFHS) traverse the membrane as a helical segment. The Extracellular segment spans residues 146–178 (KYAGFMVPYFLRNFFSQNTTIQKEDTLAIQIFS). Asn163 is a glycosylation site (N-linked (GlcNAc...) asparagine). Residues 179–199 (FVAEFSVPLLIFLVAVLLLIF) form a helical membrane-spanning segment. Residues 200–222 (SLGRHTRQMRNTVAGSRVPGRGA) lie on the Cytoplasmic side of the membrane. A helical transmembrane segment spans residues 223–243 (PISALLSILSFLILYFSHCMI). Over 244–257 (KVFLSSLKFHIRRF) the chain is Extracellular. The helical transmembrane segment at 258-278 (IFLFFILVIGIYPSGHSLILI) threads the bilayer. At 279–299 (LGNPKLKQNAKKFLLHSKCCQ) the chain is on the cytoplasmic side.

The protein belongs to the G-protein coupled receptor T2R family.

The protein localises to the membrane. Its function is as follows. Receptor that may play a role in the perception of bitterness and is gustducin-linked. May play a role in sensing the chemical composition of the gastrointestinal content. The activity of this receptor may stimulate alpha gustducin, mediate PLC-beta-2 activation and lead to the gating of TRPM5. The sequence is that of Taste receptor type 2 member 1 (TAS2R1) from Gorilla gorilla gorilla (Western lowland gorilla).